We begin with the raw amino-acid sequence, 360 residues long: Small ribosomal subunit protein bS1m (360 aa).

Positions 1–15 are enriched in low complexity; that stretch reads MSSSNLSSILRNSRI. The segment at 1 to 31 is disordered; sequence MSSSNLSSILRNSRIAQVPKPKGPLFSPDKK.

The protein belongs to the bacterial ribosomal protein bS1 family. In terms of assembly, component of the mitochondrial small ribosomal subunit.

Its subcellular location is the mitochondrion. Functionally, involved in mitochondrial genome encoded proteins translation. The protein is Small ribosomal subunit protein bS1m (MRP51) of Eremothecium gossypii (strain ATCC 10895 / CBS 109.51 / FGSC 9923 / NRRL Y-1056) (Yeast).